Here is a 919-residue protein sequence, read N- to C-terminus: MVRLSTKPPNPKVEMNLKEPPITGAGAGAAASPPAPSTLRRNPPRSARPPPTPLPNSKPSQISRLLEEAAERLKVFLRIRPLPLPERKGKAKSPTNPKQVCLVANSPNSVALTVPHSKLLDPKRGRTEVFDGFSSVFSPDSSQHDVFSQVMNPLVDDLLLGGKSGLLVAMGPTGSGKTHTVFGSPRNPGLVPLTLRRIFSPTTHEPFSKLRSFCFSMFEILSEGKGERILDLLSDATDLVLQQSTIKGLKEVSVENFADAEALLFSGMLKRTTAATNANSKSSRSQCIITIRAVHKSSDAESENSLNNAVLTIADLAGAERERRTGNQGTRLLESNFINNTSMVFGLCLRSLLEHQKNKKKPLEKHFKNSMLTRYLRDYLEGRKKMTLILNVKPGDDDYLDTSFLLRQASPYMKIKYTNLEDSSGLVSQKRSSASLICQENTKKRKIHKVAGKDDIDKDDGVTISEKDESQYKLLNSELRRVSRNEEIMTNFARALWTVLKQYKQKLLESENAVESTRELLRSKDIKIMELEKKLKVLSCSCKKFPAVEDTFVEQNNDVSSGQVAQSFVSLSSQTDLVSIDSALNKSLAVEEVSEESTGHGPERSSDYDDKTGTGGSDVCDTSIIKLIAEEELCSGDCKPEKASSSDAFIPEHDVEKENIGIVVQVLDKKLDRSESCSDGGGVTHSSSSLDHPSDQSFTDTCLQNESANLSPQFIGASKKSPIEQSEEEREEIHNITTEGIQQNVHTRGVKHHSTPSCSQEVNSGSLHVSSSQLQGMGALQQDPQSERCKPTVEITIVEYGCAQPPHVVDDHGGMYPCTLNGKSSPRKAPISPTKDNQAEKLTDKIEDLSASKPCNRKNTRRRLQPVSAMMLKEFTGPDIFVDTRKEEKVKSSRDAMGRSDKLIRLLTDHPPRARGRAQ.

The interval 1–59 (MVRLSTKPPNPKVEMNLKEPPITGAGAGAAASPPAPSTLRRNPPRSARPPPTPLPNSKP) is disordered. Residues 28-45 (GAAASPPAPSTLRRNPPR) are compositionally biased toward low complexity. Positions 46–56 (SARPPPTPLPN) are enriched in pro residues. Positions 72-415 (RLKVFLRIRP…LRQASPYMKI (344 aa)) constitute a Kinesin motor domain. Residue 171–178 (GPTGSGKT) participates in ATP binding. 5 disordered regions span residues 591–615 (EEVS…TGTG), 674–700 (SESC…SFTD), 711–730 (SPQF…EEER), 737–764 (TTEG…EVNS), and 886–919 (KEEK…GRAQ). Basic and acidic residues predominate over residues 597-612 (STGHGPERSSDYDDKT). Over residues 685–697 (HSSSSLDHPSDQS) the composition is skewed to low complexity. A compositionally biased stretch (polar residues) spans 755-764 (TPSCSQEVNS). The span at 886-912 (KEEKVKSSRDAMGRSDKLIRLLTDHPP) shows a compositional bias: basic and acidic residues.

The protein belongs to the TRAFAC class myosin-kinesin ATPase superfamily. Kinesin family. KIN-6 subfamily.

This chain is Kinesin-like protein KIN-6, found in Oryza sativa subsp. japonica (Rice).